The chain runs to 444 residues: MVGKSTLLSVLASASVAFAACSLDSHCPEETPCCSQYGECGTGAYCLGGCDPRMSFSLESCVPEPVCESASYTFTSMDGITSNTKYLGDASKSNWVYSGSPVIYNDNVLLTMSANSVGTVMASSTYMWYGNVKAKFKTSRGQGVITAFILFSDVKDEIDYEFVGSELTTAQSNYYFQGITNYDNELNITLSDTYANYHEYEIDWTPDEITWLVDGQVGRTKKRADTWNATANQWNFPQTPARVQLSLWPGGLASNGAGTIAWAGGEIDWNSEDIQNNGYYYAAFESVDISCYNAKSAPGTNSGKSYYYNSVLGTNNTVIDSKNATILSSLLATGTNMTAGESAAASGSTAASTAATVPGLTGSGGGGVGDNHSDDGSSSSDSSSGSATSSSSGSSSTGSSGFSQGDGSTSTSKSSADSLVANQERVLKGSLFAGIVAVVAMMAL.

The N-terminal stretch at 1 to 19 (MVGKSTLLSVLASASVAFA) is a signal peptide. Cys-27 and Cys-34 are joined by a disulfide. The GH16 domain occupies 57–271 (SLESCVPEPV…WAGGEIDWNS (215 aa)). Glu-157 serves as the catalytic Nucleophile. Residue Glu-161 is the Proton donor of the active site. Glu-161 serves as a coordination point for chitin. Asn-187 and Asn-228 each carry an N-linked (GlcNAc...) asparagine glycan. Chitin contacts are provided by Trp-248 and Thr-259. 4 N-linked (GlcNAc...) asparagine glycosylation sites follow: Asn-315, Asn-323, Asn-336, and Asn-371. Ser-415 carries GPI-anchor amidated serine lipidation. Positions 416 to 444 (ADSLVANQERVLKGSLFAGIVAVVAMMAL) are cleaved as a propeptide — removed in mature form.

Belongs to the glycosyl hydrolase 16 family. CRH1 subfamily. In terms of assembly, forms homodimers as well as heterodimers with other crh protein members crh1 and crh2. Dimerization may be necessary for the transglycosylation activity.

The protein localises to the cell membrane. It catalyses the reaction Random endo-hydrolysis of N-acetyl-beta-D-glucosaminide (1-&gt;4)-beta-linkages in chitin and chitodextrins.. Functionally, dual chitinase/transglycosylase that plays a role in cell wall architecture. Chitinase and transglycosylase activities are coupled. Required for the polysaccharide cross-linking at the septa and the cell wall. More specifically, transfers chitin to 1,6-beta-glucan in the cell wall. In Botryotinia fuckeliana (strain B05.10) (Noble rot fungus), this protein is Crh-like protein 3.